A 125-amino-acid polypeptide reads, in one-letter code: Protein sigma-1-small (125 aa).

This sequence belongs to the orthoreovirus sigma-1s protein family.

The protein is Protein sigma-1-small (S1) of Mammalia (T2J).